Here is a 436-residue protein sequence, read N- to C-terminus: Adenylosuccinate synthetase (436 aa).

Residues 12-18 (GDEGKGK) and 40-42 (GHT) each bind GTP. The Proton acceptor role is filled by aspartate 13. 2 residues coordinate Mg(2+): aspartate 13 and glycine 40. Residues 13 to 16 (DEGK), 38 to 41 (NAGH), threonine 128, arginine 142, glutamine 223, threonine 238, and arginine 302 contribute to the IMP site. Histidine 41 functions as the Proton donor in the catalytic mechanism. 298 to 304 (TTTGRRR) provides a ligand contact to substrate. Residues arginine 304, 330–332 (KLD), and 412–414 (SLG) each bind GTP.

This sequence belongs to the adenylosuccinate synthetase family. In terms of assembly, homodimer. It depends on Mg(2+) as a cofactor.

It localises to the cytoplasm. It carries out the reaction IMP + L-aspartate + GTP = N(6)-(1,2-dicarboxyethyl)-AMP + GDP + phosphate + 2 H(+). It functions in the pathway purine metabolism; AMP biosynthesis via de novo pathway; AMP from IMP: step 1/2. In terms of biological role, plays an important role in the de novo pathway of purine nucleotide biosynthesis. Catalyzes the first committed step in the biosynthesis of AMP from IMP. The protein is Adenylosuccinate synthetase of Prochlorococcus marinus (strain MIT 9301).